Consider the following 202-residue polypeptide: Nucleoid occlusion factor SlmA (202 aa).

The HTH tetR-type domain maps to 14-75 (KERQQQVLEV…ALIERIEQTL (62 aa)). Positions 38–57 (TTERLAKAVGVSEGALYRYF) form a DNA-binding region, H-T-H motif.

Belongs to the nucleoid occlusion factor SlmA family. As to quaternary structure, homodimer. Interacts with FtsZ.

Its subcellular location is the cytoplasm. It localises to the nucleoid. Functionally, required for nucleoid occlusion (NO) phenomenon, which prevents Z-ring formation and cell division over the nucleoid. Acts as a DNA-associated cell division inhibitor that binds simultaneously chromosomal DNA and FtsZ, and disrupts the assembly of FtsZ polymers. SlmA-DNA-binding sequences (SBS) are dispersed on non-Ter regions of the chromosome, preventing FtsZ polymerization at these regions. This is Nucleoid occlusion factor SlmA from Actinobacillus pleuropneumoniae serotype 5b (strain L20).